The following is a 188-amino-acid chain: GTPase KRas (188 aa).

GTP-binding positions include 10 to 18, 29 to 35, 59 to 60, and 116 to 119; these read GAGGVGKSA, VDEYDPT, AG, and NKCD. Residues 32 to 40 carry the Effector region motif; the sequence is YDPTIEDSY. The tract at residues 167–188 is disordered; the sequence is KEKMSKEGKKKKKKSKTKCILM. Cysteine 185 carries the cysteine methyl ester modification. Cysteine 185 carries the S-farnesyl cysteine lipid modification. Residues 186-188 constitute a propeptide, removed in mature form; that stretch reads ILM.

Belongs to the small GTPase superfamily. Ras family.

The protein localises to the cell membrane. It localises to the cytoplasm. The catalysed reaction is GTP + H2O = GDP + phosphate + H(+). Its activity is regulated as follows. Alternates between an inactive form bound to GDP and an active form bound to GTP. Activated by a guanine nucleotide-exchange factor (GEF) and inactivated by a GTPase-activating protein (GAP). In terms of biological role, ras proteins bind GDP/GTP and possess intrinsic GTPase activity. Plays an important role in the regulation of cell proliferation. This is GTPase KRas (kras1) from Oryzias latipes (Japanese rice fish).